The chain runs to 226 residues: RPA-interacting protein A (226 aa).

Residues 1–45 (MEAERRHRALYKGTTPPWKETYRKRCVERLKRNRSKLLDKFRQVG) form an interaction with importin beta region. The interval 49-171 (HGGVGGSFLV…QCGVYINTQS (123 aa)) is interaction with RPA1. An RIP-type zinc finger spans residues 144–219 (CPVCNRNYLT…ASLFMSCQEC (76 aa)).

Interacts directly with the rpa1 subunit of RPA complex. Interacts with importin beta, but not with importin alpha. Forms a complex with the RPA complex and importin beta, which is dissociated by Ran-GTP.

It is found in the nucleus. Its function is as follows. Mediates the import of RPA complex into the nucleus, via its interaction with importin beta. In Xenopus laevis (African clawed frog), this protein is RPA-interacting protein A (rpain-a).